The chain runs to 178 residues: Large ribosomal subunit protein bL19 (178 aa).

The protein belongs to the bacterial ribosomal protein bL19 family.

Functionally, this protein is located at the 30S-50S ribosomal subunit interface and may play a role in the structure and function of the aminoacyl-tRNA binding site. This chain is Large ribosomal subunit protein bL19, found in Rhizobium etli (strain ATCC 51251 / DSM 11541 / JCM 21823 / NBRC 15573 / CFN 42).